Here is a 105-residue protein sequence, read N- to C-terminus: Large ribosomal subunit protein bL21 (105 aa).

The protein belongs to the bacterial ribosomal protein bL21 family. As to quaternary structure, part of the 50S ribosomal subunit. Contacts protein L20.

In terms of biological role, this protein binds to 23S rRNA in the presence of protein L20. The polypeptide is Large ribosomal subunit protein bL21 (Rickettsia africae (strain ESF-5)).